The primary structure comprises 1165 residues: MEIKEYNPREIEEKWSRYWIEKALYHVEKPDKRKKFSVVIPPPNVTGSLHMGHALNATLQDVIVRWQRMRGRECVWVPGFDHAGIATQYVVEKQLAKEGKSRLELGREEFLKKVWEWVPKSRNAIRTQLTKLGVSVDWKRERFTLDEGFSRAVRKAFRTLFEEGLIYRAEYIVNWCPNDRTALSDLEVEYEEEKGSLWYIKYPIVDENGKDTGEFITVATTRPETMLGDTAVAVNPNDDRYKHLVGKRARLPLVNWERKDLRGNSVSNLIPIIADERVKMDFGTGAVKITPAHDPLDFEIGKTHDLPFVRVIDETGRMNENAGDFAGMDRYEAREAIVAKLREDELLEKEEEITHSVGHCYRCKTVIEPMVSVQWFVKVSDPRIKDISIKVVEEGIKEREEKELFVQLAQVEELSVVIPLKEEGRHKIVVVLDKTAKFLVGKREGELAYIYYPKGDERTLEFAKRLAEEFKDYEFMVAYEGLPKIVVMGNEQLVEPGSYLFVYDGKKLDLYKLEGEKPKFLKTLGKGEADLEVTQKSIQIKPERIKKVEEREKRVKFIPEHWKKFYLDWMYNLKDWCISRQIWWGHRIPVWYCKDCGNVNVFTDDDFDRAHDKIIFNLIADGKIDQEFTPEEVEKVLKSPHFVHPEMTVLDFYKKFVFHRYYNMDITADSLRLLFTQDMNPMAMLTPGVSTRNIYKYDSQKKKWKMVLRCKKCGSENLEQERDVLDTWFSSALWPFGVFGWPESTEDLKNLYPTDLLVTGFDIIFFWVARMIMMGTHFMKDIPFYDVYVHALVRDKYGRKMSKTIGNVIDPLDIIERYGADALRFTLAILTVQGRDIKLAEEKFEGYKHFANKIWNAARYVLMNTPEDFIARIPYMAPLKPEDKWIITKLNETAEEVNKALENYQYSQAAHAIYEFFWSDYCDWYIEFTKERIYKKAPEDNEEEKAKVENERTTALYTLHYVLEKALRILHPFMPYITEELWHKLPNAEGESISLAEFPQKNEDEIYEEDKQKVERLKEIISAIRAIRSDLQIKPSEKIKASFKTESEFSRRVIQEFKNHILNLAKLESFEEVSQRPQNTVATFSKDTEIYVHIEGHVDLDKLIQSYEKKREKLLKELERVNKKLSNENFLKKAPVEVVEKEKQIKEELENDLKKVEEILKVLRS.

A 'HIGH' region motif is present at residues 43-53 (PNVTGSLHMGH). Residues 800–804 (KMSKT) carry the 'KMSKS' region motif. Position 803 (lysine 803) interacts with ATP. Coiled coils occupy residues 1001–1032 (KNED…SDLQ) and 1097–1165 (HVDL…VLRS).

Belongs to the class-I aminoacyl-tRNA synthetase family. ValS type 1 subfamily. In terms of assembly, monomer.

The protein resides in the cytoplasm. It carries out the reaction tRNA(Val) + L-valine + ATP = L-valyl-tRNA(Val) + AMP + diphosphate. In terms of biological role, catalyzes the attachment of valine to tRNA(Val). As ValRS can inadvertently accommodate and process structurally similar amino acids such as threonine, to avoid such errors, it has a 'posttransfer' editing activity that hydrolyzes mischarged Thr-tRNA(Val) in a tRNA-dependent manner. In Aquifex aeolicus (strain VF5), this protein is Valine--tRNA ligase.